The sequence spans 156 residues: Cyanate hydratase (156 aa).

Residues arginine 96, glutamate 99, and serine 122 contribute to the active site.

Belongs to the cyanase family.

The enzyme catalyses cyanate + hydrogencarbonate + 3 H(+) = NH4(+) + 2 CO2. Catalyzes the reaction of cyanate with bicarbonate to produce ammonia and carbon dioxide. The polypeptide is Cyanate hydratase (Burkholderia thailandensis (strain ATCC 700388 / DSM 13276 / CCUG 48851 / CIP 106301 / E264)).